The following is a 780-amino-acid chain: Tripartite terminase subunit 1 (780 aa).

3 disordered regions span residues 41-66 (RGNA…AGPG), 428-447 (GAGA…GDRV), and 452-483 (GARG…WGDI). Residues 52 to 63 (ASGAGAAASSEA) show a composition bias toward low complexity. Over residues 429–439 (AGAGGPKGGAG) the composition is skewed to gly residues. Residue 691–698 (FASVYRCG) participates in ATP binding.

This sequence belongs to the herpesviridae TRM1 protein family. Associates with TRM2 and TRM3 to form the tripartite terminase complex. Interacts with portal protein.

Its subcellular location is the host nucleus. Component of the molecular motor that translocates viral genomic DNA in empty capsid during DNA packaging. Forms a tripartite terminase complex together with TRM2 and TRM3 in the host cytoplasm. Once the complex reaches the host nucleus, it interacts with the capsid portal vertex. This portal forms a ring in which genomic DNA is translocated into the capsid. TRM1 carries an endonuclease activity that plays an important role for the cleavage of concatemeric viral DNA into unit length genomes. The sequence is that of Tripartite terminase subunit 1 from Homo sapiens (Human).